Consider the following 891-residue polypeptide: Translation initiation factor IF-2 (891 aa).

Positions 390 to 559 constitute a tr-type G domain; it reads NRAPIVTIMG…LLQSDMLELK (170 aa). The G1 stretch occupies residues 399–406; the sequence is GHVDHGKT. Position 399-406 (399-406) interacts with GTP; that stretch reads GHVDHGKT. The G2 stretch occupies residues 424–428; sequence GITQS. The G3 stretch occupies residues 445–448; that stretch reads DTPG. GTP contacts are provided by residues 445 to 449 and 499 to 502; these read DTPGH and NKID. Positions 499–502 are G4; it reads NKID. The segment at 535–537 is G5; it reads SAT.

It belongs to the TRAFAC class translation factor GTPase superfamily. Classic translation factor GTPase family. IF-2 subfamily.

Its subcellular location is the cytoplasm. In terms of biological role, one of the essential components for the initiation of protein synthesis. Protects formylmethionyl-tRNA from spontaneous hydrolysis and promotes its binding to the 30S ribosomal subunits. Also involved in the hydrolysis of GTP during the formation of the 70S ribosomal complex. The polypeptide is Translation initiation factor IF-2 (Blochmanniella pennsylvanica (strain BPEN)).